A 90-amino-acid chain; its full sequence is Protein RALF-like 29 (90 aa).

Residues 1 to 25 (MIKTKEVTFVTILIVLCVFISTIHA) form the signal peptide. Intrachain disulfides connect cysteine 41/cysteine 50 and cysteine 63/cysteine 69.

Belongs to the plant rapid alkalinization factor (RALF) family.

It is found in the secreted. Functionally, cell signaling peptide that may regulate plant stress, growth, and development. Mediates a rapid alkalinization of extracellular space by mediating a transient increase in the cytoplasmic Ca(2+) concentration leading to a calcium-dependent signaling events through a cell surface receptor and a concomitant activation of some intracellular mitogen-activated protein kinases. The sequence is that of Protein RALF-like 29 (RALFL29) from Arabidopsis thaliana (Mouse-ear cress).